A 25-amino-acid polypeptide reads, in one-letter code: Dermaseptin-5.1TR (25 aa).

Val25 bears the Valine amide mark.

Expressed by the skin glands.

It is found in the secreted. In terms of biological role, has antimicrobial activity. In Phyllomedusa trinitatis (Trinidad leaf frog), this protein is Dermaseptin-5.1TR.